A 625-amino-acid chain; its full sequence is Putative xanthine/uracil permease C887.17 (625 aa).

The next 10 membrane-spanning stretches (helical) occupy residues Ala49–Val69, Ala107–Met127, Glu154–Leu174, Ala192–Ile212, Met246–Tyr263, Phe328–Tyr348, Val369–Val389, Gly406–Phe426, Ile429–Thr449, and Ile465–Ile485. The disordered stretch occupies residues Glu595–Ile625.

It belongs to the nucleobase:cation symporter-2 (NCS2) (TC 2.A.40) family. Azg-like subfamily.

The protein resides in the golgi apparatus membrane. The polypeptide is Putative xanthine/uracil permease C887.17 (Schizosaccharomyces pombe (strain 972 / ATCC 24843) (Fission yeast)).